The following is a 238-amino-acid chain: ATP synthase subunit a (238 aa).

The next 4 membrane-spanning stretches (helical) occupy residues 17-37 (LSNI…AIIC), 80-100 (ITLL…QIAI), 112-132 (DPIV…YYGI), and 194-214 (IFVG…SIFI).

Belongs to the ATPase A chain family. F-type ATPases have 2 components, CF(1) - the catalytic core - and CF(0) - the membrane proton channel. CF(1) has five subunits: alpha(3), beta(3), gamma(1), delta(1), epsilon(1). CF(0) has three main subunits: a(1), b(2) and c(9-12). The alpha and beta chains form an alternating ring which encloses part of the gamma chain. CF(1) is attached to CF(0) by a central stalk formed by the gamma and epsilon chains, while a peripheral stalk is formed by the delta and b chains.

It is found in the cell membrane. Functionally, key component of the proton channel; it plays a direct role in the translocation of protons across the membrane. This Listeria welshimeri serovar 6b (strain ATCC 35897 / DSM 20650 / CCUG 15529 / CIP 8149 / NCTC 11857 / SLCC 5334 / V8) protein is ATP synthase subunit a.